The chain runs to 368 residues: CST complex subunit STN1 (368 aa).

The interaction with CTC1 stretch occupies residues 1 to 185; that stretch reads MQPGSSRCEE…KVYDQPFHSS (185 aa). The segment at residues 57 to 155 is a DNA-binding region (OB); the sequence is VDVLGTVIGV…EIHATTYYKV (99 aa). Winged helix-turn-helix (wHTH) regions lie at residues 191 to 295 and 296 to 368; these read EALS…YVTR and EDKD…YTAF.

Belongs to the STN1 family. In terms of assembly, component of the CST complex, composed of TEN1/C17orf106, CTC1/C17orf68 and STN1; in the complex interacts directly with TEN1 and CTC1. Interacts with ACD/TPP1, POT1 and POLA1.

The protein resides in the nucleus. It is found in the chromosome. It localises to the telomere. In terms of biological role, component of the CST complex proposed to act as a specialized replication factor promoting DNA replication under conditions of replication stress or natural replication barriers such as the telomere duplex. The CST complex binds single-stranded DNA with high affinity in a sequence-independent manner, while isolated subunits bind DNA with low affinity by themselves. Initially the CST complex has been proposed to protect telomeres from DNA degradation. However, the CST complex has been shown to be involved in several aspects of telomere replication. The CST complex inhibits telomerase and is involved in telomere length homeostasis; it is proposed to bind to newly telomerase-synthesized 3' overhangs and to terminate telomerase action implicating the association with the ACD:POT1 complex thus interfering with its telomerase stimulation activity. The CST complex is also proposed to be involved in fill-in synthesis of the telomeric C-strand probably implicating recruitment and activation of DNA polymerase alpha. The CST complex facilitates recovery from many forms of exogenous DNA damage; seems to be involved in the re-initiation of DNA replication at repaired forks and/or dormant origins. Required for efficicient replication of the duplex region of the telomere. Promotes efficient replication of lagging-strand telomeres. Promotes general replication start following replication-fork stalling implicating new origin firing. May be in involved in C-strand fill-in during late S/G2 phase independent of its role in telomere duplex replication. Its function is as follows. Component of the CST complex, a complex that binds to single-stranded DNA and is required to protect telomeres from DNA degradation. The CST complex binds single-stranded DNA with high affinity in a sequence-independent manner, while isolated subunits bind DNA with low affinity by themselves. In addition to telomere protection, the CST complex has probably a more general role in DNA metabolism at non-telomeric sites. The chain is CST complex subunit STN1 from Homo sapiens (Human).